The sequence spans 289 residues: B- and T-lymphocyte attenuator (289 aa).

An N-terminal signal peptide occupies residues 1 to 30 (MKTLPAMLGTGKLFWVFFLIPYLDIWNIHG). The 102-residue stretch at 31–132 (KESCDVQLYI…LIESHSTTLY (102 aa)) folds into the Ig-like V-type domain. The Extracellular portion of the chain corresponds to 31–157 (KESCDVQLYI…MASRPWLLYR (127 aa)). Intrachain disulfides connect C34–C63, C58–C115, and C72–C79. N75, N94, and N110 each carry an N-linked (GlcNAc...) asparagine glycan. A helical transmembrane segment spans residues 158 to 178 (LLPLGGLPLLITTCFCLFCCL). Residues 179-289 (RRHQGKQNEL…TEYASICVRS (111 aa)) lie on the Cytoplasmic side of the membrane.

As to quaternary structure, interacts with tyrosine phosphatases PTPN6/SHP-1 and PTPN11/SHP-2. Interacts with TNFRSF14/HVEM (via cysteine-rich domain 1). Phosphorylated on Tyr residues by TNFRSF14 and by antigen receptors cross-linking, both inducing association with PTPN6 and PTPN11. In terms of processing, N-glycosylated.

The protein localises to the cell membrane. In terms of biological role, inhibitory receptor on lymphocytes that negatively regulates antigen receptor signaling via PTPN6/SHP-1 and PTPN11/SHP-2. May interact in cis (on the same cell) or in trans (on other cells) with TNFRSF14. In cis interactions, appears to play an immune regulatory role inhibiting in trans interactions in naive T cells to maintain a resting state. In trans interactions, can predominate during adaptive immune response to provide survival signals to effector T cells. This chain is B- and T-lymphocyte attenuator, found in Homo sapiens (Human).